Consider the following 1213-residue polypeptide: uncharacterized protein (1213 aa).

Positions 289–390 constitute a PH domain; it reads ATKRQGWLLR…WGSVINNARE (102 aa). One can recognise a VASt domain in the interval 776–945; the sequence is LDDIVFDRVY…EVNFLEKATR (170 aa). The next 2 membrane-spanning stretches (helical) occupy residues 996-1016 and 1025-1045; these read LFLQ…FHIF and FLVI…FCFG.

The protein resides in the cytoplasm. It localises to the nucleus membrane. Its subcellular location is the cytoskeleton. It is found in the microtubule organizing center. The protein localises to the spindle pole body. This is an uncharacterized protein from Schizosaccharomyces pombe (strain 972 / ATCC 24843) (Fission yeast).